Consider the following 1204-residue polypeptide: MEQAPNMAEPRGPVDHGVQIRFITEPVSGAEMGTLRRGGRRPAKDARASTYGVAVRVQGIAGQPFVVLNSGEKGGDSFGVQIKGASDQGASGALSSDSELPENPYSQVQGFPAPSQSSTSDEDPGAQWNGKLLRSQSQASLAGPGPVDPSNRSTSMLDLAPKVASPGSTIDTAPLSSVDSLINKFDGQLGGQARGRTGRRTRMLPPEQRKRSKSLDSRLPRDTLEERERQSTNHWNPSTKYNNHVGSLKQPAQSPSPSPLSGFSRARQTQDWVLQSFEEPRGRAQDPTMLQFKSTPDLLRDQQEAAPPGSVDHMKATIYGILREGSSESEASVRRKVSLVLEKMQPLGVISSGSSKAMAGQGELARKVEELQRKLDDEVKKRQKLEPSRAGLERQLEEKTEECSQLQELLERREGEAQQSSKELQNMKRLLDQGESLQHGLETQVMELQSKLKQVQGPEPAKELLLKDLLETRELLEEVLEGKQRVEEQLRLRERELTALKGALKEEVASRDQEVEHVRQQCQRDTEQLRKSMQDASQDHAVLEAERQKMSALVRGLQRELEETSEETGHWQSMFQKNKEELRATKQELLQLRMEKEEMEEELGEKIEALQRELEQARASAGDARQVEVLKKELRRAQEELEELQAERQSQEVAGRHRDRELEKQLAGLRVEADRGRELEEQNFQLQKTLQQLRHDCEEASKARGMAAEAEATVLGQRRGAVEAALRETQGDNDELRRRVLGLEQQLRETRGLVDGGEAAEARLRDKLQRLEADKQRLEEALNASQEEEGSLAAAKRALEARLEEAQRGLARLGQEQQTLTRALEEEGKQREALRRSKAELEEQKRLLDRTVDRLNEELEQIGEASKQALQQLQAQLEEYKEKARREVADAQRQAKDWASEAEKSSGGLNRLQDEIQRLRQALQACQAERDTAQLDKELLAQRLQGLEQEAENKKRSQDDRARQLKGLEEKVSRLEAELDEEKNTVELLTDRVNRGRDQVDQLRTELMQERSARQDLECDKISLERQNKDLKTRLASSEGFQKPSASLSQLESQNQLLQERLQAEEREKTVLQSTNRKLERKVKELSIQIEDERQHVNDQKDQLSLRVKAFFRQVDEAEEEIERLDSLRRKAQRELEEQHEVNGQLQARVKSLEKDSWRKASRSAAESALKHEGLSSDEEFDSVYDPSSIASLLTESNLQTSSC.

The segment at 7-357 is head; it reads MAEPRGPVDH…GVISSGSSKA (351 aa). Residues 25–48 form a disordered region; the sequence is EPVSGAEMGTLRRGGRRPAKDARA. The ZIM signature appears at 48-62; that stretch reads ASTYGVAVRVQGIAG. The interaction with TJP1/ZO1 stretch occupies residues 54–67; the sequence is AVRVQGIAGQPFVV. Disordered stretches follow at residues 68-174 and 186-266; these read LNSG…DTAP and DGQL…FSRA. Residues 93–119 are compositionally biased toward polar residues; the sequence is ALSSDSELPENPYSQVQGFPAPSQSST. Residues Ser-95, Ser-96, Ser-98, Ser-135, Ser-137, Ser-140, Ser-155, Ser-165, Ser-214, and Ser-217 each carry the phosphoserine modification. Basic and acidic residues predominate over residues 207–231; the sequence is EQRKRSKSLDSRLPRDTLEERERQS. Polar residues predominate over residues 232–245; that stretch reads TNHWNPSTKYNNHV. Low complexity predominate over residues 247–261; the sequence is SLKQPAQSPSPSPLS. 4 positions are modified to phosphoserine: Ser-258, Ser-276, Ser-338, and Ser-351. Residues 358-1161 are a coiled coil; it reads MAGQGELARK…SLEKDSWRKA (804 aa). Residues 379-398 are disordered; the sequence is VKKRQKLEPSRAGLERQLEE. An N6-acetyllysine modification is found at Lys-579. Residues 1161 to 1182 are disordered; it reads ASRSAAESALKHEGLSSDEEFD. The segment at 1162-1204 is tail; sequence SRSAAESALKHEGLSSDEEFDSVYDPSSIASLLTESNLQTSSC. Residues Ser-1176, Ser-1177, and Ser-1183 each carry the phosphoserine modification.

This sequence belongs to the cingulin family. Homodimer. Interacts with TJP1/ZO1 and SPEF1.

The protein resides in the cell junction. Its subcellular location is the tight junction. Functionally, probably plays a role in the formation and regulation of the tight junction (TJ) paracellular permeability barrier. The chain is Cingulin from Plecturocebus moloch (Dusky titi monkey).